Here is a 428-residue protein sequence, read N- to C-terminus: Anaerobic glycerol-3-phosphate dehydrogenase subunit B (428 aa).

It belongs to the anaerobic G-3-P dehydrogenase subunit B family. Composed of a catalytic GlpA/B dimer and of membrane bound GlpC. It depends on FMN as a cofactor.

It catalyses the reaction a quinone + sn-glycerol 3-phosphate = dihydroxyacetone phosphate + a quinol. It participates in polyol metabolism; glycerol degradation via glycerol kinase pathway; glycerone phosphate from sn-glycerol 3-phosphate (anaerobic route): step 1/1. Its function is as follows. Conversion of glycerol 3-phosphate to dihydroxyacetone. Uses fumarate or nitrate as electron acceptor. This chain is Anaerobic glycerol-3-phosphate dehydrogenase subunit B, found in Actinobacillus pleuropneumoniae serotype 5b (strain L20).